The primary structure comprises 264 residues: MTATAQILPNTLEQNSDNISKKPLLGVNVDHVATLRQARGVSYPSPLAAALLCEKAGADGITIHLREDRRHIQDADVYEMAGQLTTRMNLEMAATTEMLEIACRVKPYWVCLVPEKRAELTTEGGLDVAGQLDLLKDYVAKLQAAGIKVSLFIDPEDKQINAAVTCGADAIELHTGSYAEAGLAGDIEKGSVELERIKTAVITAKRIDSKLLVNAGHGLTHDNVNAIAQIDGIYELNIGHALIADALFVGIEQAVIMMKIAMHR.

Asn28 provides a ligand contact to 3-amino-2-oxopropyl phosphate. 30 to 31 (DH) provides a ligand contact to 1-deoxy-D-xylulose 5-phosphate. Arg39 lines the 3-amino-2-oxopropyl phosphate pocket. The Proton acceptor role is filled by His64. Residues Arg66 and His71 each contribute to the 1-deoxy-D-xylulose 5-phosphate site. Glu91 acts as the Proton acceptor in catalysis. A 1-deoxy-D-xylulose 5-phosphate-binding site is contributed by Thr121. The active-site Proton donor is His217. Residues Gly218 and 239-240 (GH) contribute to the 3-amino-2-oxopropyl phosphate site.

This sequence belongs to the PNP synthase family. As to quaternary structure, homooctamer; tetramer of dimers.

Its subcellular location is the cytoplasm. The catalysed reaction is 3-amino-2-oxopropyl phosphate + 1-deoxy-D-xylulose 5-phosphate = pyridoxine 5'-phosphate + phosphate + 2 H2O + H(+). Its pathway is cofactor biosynthesis; pyridoxine 5'-phosphate biosynthesis; pyridoxine 5'-phosphate from D-erythrose 4-phosphate: step 5/5. Its function is as follows. Catalyzes the complicated ring closure reaction between the two acyclic compounds 1-deoxy-D-xylulose-5-phosphate (DXP) and 3-amino-2-oxopropyl phosphate (1-amino-acetone-3-phosphate or AAP) to form pyridoxine 5'-phosphate (PNP) and inorganic phosphate. The chain is Pyridoxine 5'-phosphate synthase from Psychrobacter arcticus (strain DSM 17307 / VKM B-2377 / 273-4).